Here is a 1001-residue protein sequence, read N- to C-terminus: MSGLSNKRAAGDGGSGPPEKKMNREEKTTTTLIEPIRLGGISSTEEMDSKVLQFKNKKLAERLEQRQACEDELRERIEKLEKRQATDDATLLIVNRYWAQLDETVEALLQCYENQRELSSGTEVPGCQEGLTRDVIPRPDPGTSDLREPLPVQFRAPLSEPALAFVVALGASSCEEVELQLQGRMEFSKAAVSRVVEASDRLQRQVEELCQRVYSRGDSEAPGEVARVRTRELGRENRRLQDLATQLQEKHHRISLEYSELQDKVTSTETKVLEMETTVEDLQWDIEKLRKREQKLNKHLAEALEQLNSGYYVSGSSTGFQGGQITLSMQKFEMLNAELEENQELANSRMAELEKLQAELQGAVRTNERLKVALRSLPEEVVRETGEYRMLQAQFSLLYNESLQVKTQLDEARGLLLASKNSHLRHIEHMESDELGLQKKLRTEVIQLEDTLAQVRKEYEMLRIEFEQNLAANEQAGPINREMRHLISSLQNHNHQLKGDAQRYKRKLREVQAEIGKLRAQASGSSHCIPTLSHPDDPGLNALAPGKEDSGPGPGGTPDCKKEMALLAGATSATSSIKKEELVSSEDDAQALTPVTQGLPSRGREPEARPKRELREREGPSLGPPPAASTLSRADREKAKVEEAKRKESELLKGLRAELKKAQESQKEMKLLLDMYKSAPKEQRDKVQLMAAERKAKAEVDELRSRIRELEERDRRESKKIADEDALRRIRQAEEQIEHLQRKLGATKQEEEALLSEMDVTGQAFEDMQEQNGRLLQQLREKDDANFKLMSERIKANQIHKLLREEKDELGEQVLGLKSQVDAQLLTVQKLEEKERALQGSLGGVEKELTLRSQALELNKRKAVEAAQLAEDLKVQLEHVQTRLREIQPCLAESRAAREKESFNLKRAQEDISRLRRKLEKQRKVEVYADADEILQEEIKEYKARLTCPCCNTRKKDAVLTKCFHVFCFECVRGRYEARQRKCPKCNAAFGAHDFHRVYIS.

Residues 1–40 (MSGLSNKRAAGDGGSGPPEKKMNREEKTTTTLIEPIRLGG) are disordered. Residues 18–28 (PEKKMNREEKT) are compositionally biased toward basic and acidic residues. An N6-acetyllysine modification is found at lysine 20. Serine 42 carries the phosphoserine modification. A coiled-coil region spans residues 55–91 (KNKKLAERLEQRQACEDELRERIEKLEKRQATDDATL). Residues 122–142 (TEVPGCQEGLTRDVIPRPDPG) form a disordered region. Coiled-coil stretches lie at residues 189-377 (KAAV…LRSL) and 437-525 (LQKK…ASGS). An N6-acetyllysine mark is found at lysine 355 and lysine 517. A disordered region spans residues 519-647 (RAQASGSSHC…KAKVEEAKRK (129 aa)). Residues 565–576 (ALLAGATSATSS) are compositionally biased toward low complexity. Glycyl lysine isopeptide (Lys-Gly) (interchain with G-Cter in SUMO2) cross-links involve residues lysine 578 and lysine 579. Phosphoserine is present on residues serine 584 and serine 585. Composition is skewed to basic and acidic residues over residues 602–619 (RGRE…EREG) and 633–647 (RADR…AKRK). Residues 627–946 (AASTLSRADR…EEIKEYKARL (320 aa)) adopt a coiled-coil conformation. An RING-type zinc finger spans residues 948–987 (CPCCNTRKKDAVLTKCFHVFCFECVRGRYEARQRKCPKCN).

The protein belongs to the BRE1 family. As to quaternary structure, component of the RNF20/40 complex (also known as BRE1 complex) probably composed of 2 copies of RNF20/BRE1A and 2 copies of RNF40/BRE1B. Interacts with UBE2E1/UBCH6. Interacts with RB1 and WAC.

The protein localises to the nucleus. It catalyses the reaction S-ubiquitinyl-[E2 ubiquitin-conjugating enzyme]-L-cysteine + [acceptor protein]-L-lysine = [E2 ubiquitin-conjugating enzyme]-L-cysteine + N(6)-ubiquitinyl-[acceptor protein]-L-lysine.. It participates in protein modification; protein ubiquitination. Component of the RNF20/40 E3 ubiquitin-protein ligase complex that mediates monoubiquitination of 'Lys-120' of histone H2B (H2BK120ub1). H2BK120ub1 gives a specific tag for epigenetic transcriptional activation and is also prerequisite for histone H3 'Lys-4' and 'Lys-79' methylation (H3K4me and H3K79me, respectively). It thereby plays a central role in histone code and gene regulation. The RNF20/40 complex forms a H2B ubiquitin ligase complex in cooperation with the E2 enzyme UBE2A or UBE2B; reports about the cooperation with UBE2E1/UBCH are contradictory. Required for transcriptional activation of Hox genes. In Mus musculus (Mouse), this protein is E3 ubiquitin-protein ligase BRE1B (Rnf40).